The primary structure comprises 1230 residues: ATP-dependent helicase/nuclease subunit A (1230 aa).

One can recognise a UvrD-like helicase ATP-binding domain in the interval 9–480 (STWTDDQWKA…IDLNKNFRSR (472 aa)). ATP is bound at residue 30–37 (AAAGSGKT). The region spanning 507–796 (QAELKLGASY…RLMTIHSSKG (290 aa)) is the UvrD-like helicase C-terminal domain.

This sequence belongs to the helicase family. AddA subfamily. As to quaternary structure, heterodimer of AddA and AddB/RexB. Mg(2+) is required as a cofactor.

The catalysed reaction is Couples ATP hydrolysis with the unwinding of duplex DNA by translocating in the 3'-5' direction.. The enzyme catalyses ATP + H2O = ADP + phosphate + H(+). In terms of biological role, the heterodimer acts as both an ATP-dependent DNA helicase and an ATP-dependent, dual-direction single-stranded exonuclease. Recognizes the chi site generating a DNA molecule suitable for the initiation of homologous recombination. The AddA nuclease domain is required for chi fragment generation; this subunit has the helicase and 3' -&gt; 5' nuclease activities. In Bacillus licheniformis (strain ATCC 14580 / DSM 13 / JCM 2505 / CCUG 7422 / NBRC 12200 / NCIMB 9375 / NCTC 10341 / NRRL NRS-1264 / Gibson 46), this protein is ATP-dependent helicase/nuclease subunit A.